Reading from the N-terminus, the 256-residue chain is Pyridoxine 5'-phosphate synthase (256 aa).

Residues Asn-8 and Arg-19 each contribute to the 3-amino-2-oxopropyl phosphate site. The Proton acceptor role is filled by His-44. Arg-46 and His-51 together coordinate 1-deoxy-D-xylulose 5-phosphate. Glu-74 serves as the catalytic Proton acceptor. Thr-111 is a 1-deoxy-D-xylulose 5-phosphate binding site. The active-site Proton donor is His-202. Residues Asp-203 and 225-226 (GH) each bind 3-amino-2-oxopropyl phosphate.

This sequence belongs to the PNP synthase family. In terms of assembly, homooctamer; tetramer of dimers.

The protein localises to the cytoplasm. The catalysed reaction is 3-amino-2-oxopropyl phosphate + 1-deoxy-D-xylulose 5-phosphate = pyridoxine 5'-phosphate + phosphate + 2 H2O + H(+). It participates in cofactor biosynthesis; pyridoxine 5'-phosphate biosynthesis; pyridoxine 5'-phosphate from D-erythrose 4-phosphate: step 5/5. Catalyzes the complicated ring closure reaction between the two acyclic compounds 1-deoxy-D-xylulose-5-phosphate (DXP) and 3-amino-2-oxopropyl phosphate (1-amino-acetone-3-phosphate or AAP) to form pyridoxine 5'-phosphate (PNP) and inorganic phosphate. In Xanthomonas campestris pv. campestris (strain 8004), this protein is Pyridoxine 5'-phosphate synthase.